Consider the following 75-residue polypeptide: Small ribosomal subunit protein bS18 (75 aa).

This sequence belongs to the bacterial ribosomal protein bS18 family. In terms of assembly, part of the 30S ribosomal subunit. Forms a tight heterodimer with protein bS6.

Functionally, binds as a heterodimer with protein bS6 to the central domain of the 16S rRNA, where it helps stabilize the platform of the 30S subunit. The chain is Small ribosomal subunit protein bS18 from Buchnera aphidicola subsp. Acyrthosiphon pisum (strain 5A).